Here is a 157-residue protein sequence, read N- to C-terminus: Transcription elongation factor GreA (157 aa).

This sequence belongs to the GreA/GreB family.

Its function is as follows. Necessary for efficient RNA polymerase transcription elongation past template-encoded arresting sites. The arresting sites in DNA have the property of trapping a certain fraction of elongating RNA polymerases that pass through, resulting in locked ternary complexes. Cleavage of the nascent transcript by cleavage factors such as GreA or GreB allows the resumption of elongation from the new 3'terminus. GreA releases sequences of 2 to 3 nucleotides. This Brucella abortus (strain S19) protein is Transcription elongation factor GreA.